A 401-amino-acid polypeptide reads, in one-letter code: Pectate lyase (401 aa).

A signal peptide spans 1–20; that stretch reads MATTILPLILFISSLAIASS. N38 carries N-linked (GlcNAc...) asparagine glycosylation. Ca(2+)-binding residues include D199, D223, and D227. R279 is an active-site residue.

It belongs to the polysaccharide lyase 1 family. Requires Ca(2+) as cofactor. Expressed in sites of vascular differentiation and in new primordia on the flank of the shoot meristem.

The enzyme catalyses Eliminative cleavage of (1-&gt;4)-alpha-D-galacturonan to give oligosaccharides with 4-deoxy-alpha-D-galact-4-enuronosyl groups at their non-reducing ends.. The protein operates within glycan metabolism; pectin degradation; 2-dehydro-3-deoxy-D-gluconate from pectin: step 2/5. Functionally, involved in the degradation of pectin. May assist in the removal and modification of an existing pectin matrix in order to allow the deposition of newly synthesized walls polymers for a specialized function or to create an architecture that is extensible. This chain is Pectate lyase, found in Zinnia elegans (Garden zinnia).